A 255-amino-acid polypeptide reads, in one-letter code: Postacrosomal sheath WW domain-binding protein (255 aa).

In terms of domain architecture, GRAM spans 15-87 (LIPNGESLLK…DLITNLTVEQ (73 aa)). 7 consecutive repeat copies span residues 139-145 (YGAPPAG), 146-152 (YGAPPAG), 153-159 (YGAPPPG), 160-166 (YGAPPAG), 167-173 (YGAPPPG), 174-180 (YGAPPAG), and 202-208 (YGAPPLG). A 6 X 7 AA tandem repeat of Y-G-X-P-P-X-G region spans residues 139–208 (YGAPPAGYGA…PAGYGAPPLG (70 aa)). A PPxY motif motif is present at residues 171-174 (PPGY). Disordered stretches follow at residues 180–199 (GYGAQPAGNEGPPVGYRASP) and 204–255 (APPL…ASSS).

Functionally, may play a role in meiotic resumption and pronuclear formation, mediated by a WW domain-signaling pathway during fertilization. This chain is Postacrosomal sheath WW domain-binding protein (WBP2NL), found in Macaca fascicularis (Crab-eating macaque).